Consider the following 314-residue polypeptide: Ribosomal RNA small subunit methyltransferase H (314 aa).

Residues 36–38, D56, F80, D102, and Q109 contribute to the S-adenosyl-L-methionine site; that span reads GGH. A disordered region spans residues 278–300; that stretch reads GGRSLKSIGKMKPSEEEVADNPR. Positions 289–300 are enriched in basic and acidic residues; that stretch reads KPSEEEVADNPR.

It belongs to the methyltransferase superfamily. RsmH family.

It localises to the cytoplasm. It catalyses the reaction cytidine(1402) in 16S rRNA + S-adenosyl-L-methionine = N(4)-methylcytidine(1402) in 16S rRNA + S-adenosyl-L-homocysteine + H(+). Its function is as follows. Specifically methylates the N4 position of cytidine in position 1402 (C1402) of 16S rRNA. In Photorhabdus laumondii subsp. laumondii (strain DSM 15139 / CIP 105565 / TT01) (Photorhabdus luminescens subsp. laumondii), this protein is Ribosomal RNA small subunit methyltransferase H.